A 503-amino-acid chain; its full sequence is Splicing factor 3A subunit 3 (503 aa).

Disordered stretches follow at residues 296 to 317 (PALM…EHER) and 341 to 384 (ATKE…NPKN). Acidic residues predominate over residues 358 to 377 (DDSDVEASESDNEDDPDADD). Phosphoserine is present on residues Ser-360, Ser-365, and Ser-367. The Matrin-type zinc finger occupies 408–439 (YNCEICGNFTYKGPKAFQRHFAEWRHAHGMRC).

Belongs to the SF3A3 family. In terms of assembly, probable component of a the U2 small nuclear ribonucleoproteins complex (U2 snRNP). As to expression, ubiquitous. In ovaries and testes, it is expressed in all germ and somatic cells. Highly expressed in spermatogonias and spermatocytes. Highly expressed in the germ cells of larval testes, while it is weakly expressed in fat body cells, in polyploid nuclei of salivary glands, and in larval brain.

The protein localises to the nucleus. In terms of biological role, probable subunit of a splicing factor complex required for 'A' complex assembly formed by the stable binding of U2 snRNP to the branchpoint sequence (BPS) in pre-mRNA. Involved in male fertility. The chain is Splicing factor 3A subunit 3 (noi) from Drosophila melanogaster (Fruit fly).